The sequence spans 112 residues: 2Fe-2S ferredoxin (112 aa).

The 103-residue stretch at 5 to 107 (IKVTFIINDG…GIKVRIPATT (103 aa)) folds into the 2Fe-2S ferredoxin-type domain. Positions 42, 48, 51, and 88 each coordinate [2Fe-2S] cluster.

It belongs to the adrenodoxin/putidaredoxin family. The cofactor is [2Fe-2S] cluster.

Its function is as follows. Ferredoxin are iron-sulfur proteins that transfer electrons in a wide variety of metabolic reactions. In Rickettsia conorii (strain ATCC VR-613 / Malish 7), this protein is 2Fe-2S ferredoxin (fdxB).